The sequence spans 404 residues: Phosphoglycerate kinase (404 aa).

Substrate is bound by residues 21 to 23, Arg38, 61 to 64, Arg126, and Arg159; these read DFN and HLGR. ATP contacts are provided by residues Lys210, Glu333, and 360 to 363; that span reads GGDS.

It belongs to the phosphoglycerate kinase family. Monomer.

Its subcellular location is the cytoplasm. It catalyses the reaction (2R)-3-phosphoglycerate + ATP = (2R)-3-phospho-glyceroyl phosphate + ADP. It functions in the pathway carbohydrate degradation; glycolysis; pyruvate from D-glyceraldehyde 3-phosphate: step 2/5. This Acidobacterium capsulatum (strain ATCC 51196 / DSM 11244 / BCRC 80197 / JCM 7670 / NBRC 15755 / NCIMB 13165 / 161) protein is Phosphoglycerate kinase.